A 704-amino-acid polypeptide reads, in one-letter code: Elongation factor G (704 aa).

One can recognise a tr-type G domain in the interval 8-291 (DKVRNIGIMA…AVVEYLASPV (284 aa)). Residues 17 to 24 (AHIDAGKT), 90 to 94 (DTPGH), and 144 to 147 (NKMD) each bind GTP.

It belongs to the TRAFAC class translation factor GTPase superfamily. Classic translation factor GTPase family. EF-G/EF-2 subfamily.

The protein localises to the cytoplasm. In terms of biological role, catalyzes the GTP-dependent ribosomal translocation step during translation elongation. During this step, the ribosome changes from the pre-translocational (PRE) to the post-translocational (POST) state as the newly formed A-site-bound peptidyl-tRNA and P-site-bound deacylated tRNA move to the P and E sites, respectively. Catalyzes the coordinated movement of the two tRNA molecules, the mRNA and conformational changes in the ribosome. The chain is Elongation factor G from Chlorobium limicola (strain DSM 245 / NBRC 103803 / 6330).